Reading from the N-terminus, the 296-residue chain is Bifunctional protein FolD (296 aa).

NADP(+) contacts are provided by residues 166 to 168 (GRS), S195, and T236.

It belongs to the tetrahydrofolate dehydrogenase/cyclohydrolase family. As to quaternary structure, homodimer.

The enzyme catalyses (6R)-5,10-methylene-5,6,7,8-tetrahydrofolate + NADP(+) = (6R)-5,10-methenyltetrahydrofolate + NADPH. The catalysed reaction is (6R)-5,10-methenyltetrahydrofolate + H2O = (6R)-10-formyltetrahydrofolate + H(+). The protein operates within one-carbon metabolism; tetrahydrofolate interconversion. In terms of biological role, catalyzes the oxidation of 5,10-methylenetetrahydrofolate to 5,10-methenyltetrahydrofolate and then the hydrolysis of 5,10-methenyltetrahydrofolate to 10-formyltetrahydrofolate. In Dehalococcoides mccartyi (strain ATCC BAA-2100 / JCM 16839 / KCTC 5957 / BAV1), this protein is Bifunctional protein FolD.